The following is a 155-amino-acid chain: Secreted RxLR effector protein RXLR-C301 (155 aa).

Residues 1 to 24 form the signal peptide; it reads MRLYALSVSLLAAITLLACVIASA. Residues 34-64 carry the RxLR-dEER motif; it reads RRLSQDVSETEITELSESKKPTAQDIDNEER.

It belongs to the RxLR effector family.

The protein localises to the secreted. It is found in the host cell membrane. In terms of biological role, secreted effector that does not suppress pattern-triggered immunity (PTI) in plant host. In Plasmopara halstedii (Downy mildew of sunflower), this protein is Secreted RxLR effector protein RXLR-C301.